A 435-amino-acid chain; its full sequence is Serine/threonine-protein kinase 40 (435 aa).

Positions 1-10 (MKRRASDRGA) are enriched in basic and acidic residues. Residues 1–25 (MKRRASDRGAGETSARAKALGSGIS) form a disordered region. Residues 35–331 (FILGPRLGNS…ADVLEALSAI (297 aa)) enclose the Protein kinase domain. ATP contacts are provided by residues 41-49 (LGNSPVPSI) and K66. Residue R196 is the Proton acceptor of the active site.

The protein belongs to the protein kinase superfamily. CAMK Ser/Thr protein kinase family. As to expression, strongly expressed in heart, brain, placenta, lung, skeletal muscle, kidney, spleen, thymus, prostate, liver, pancreas, testis, ovary, small intestine, colon and peripheral blood leukocytes.

It is found in the nucleus. The protein localises to the cytoplasm. It catalyses the reaction L-seryl-[protein] + ATP = O-phospho-L-seryl-[protein] + ADP + H(+). The enzyme catalyses L-threonyl-[protein] + ATP = O-phospho-L-threonyl-[protein] + ADP + H(+). In terms of biological role, may be a negative regulator of NF-kappa-B and p53-mediated gene transcription. The protein is Serine/threonine-protein kinase 40 (STK40) of Homo sapiens (Human).